A 251-amino-acid chain; its full sequence is Cytochrome c oxidase subunit 2 (251 aa).

Residues 1 to 15 (MLDLLRLQLTTFIMN) constitute a propeptide, removed in mature form. Residues 16-30 (DVPTPYACYFQDSAT) lie on the Mitochondrial intermembrane side of the membrane. The chain crosses the membrane as a helical span at residues 31 to 64 (PNQEGILELHDNIMFYLLVILGLVSWMLYTIVMT). Topologically, residues 65–78 (YSKNPIAYKYIKHG) are mitochondrial matrix. The chain crosses the membrane as a helical span at residues 79 to 108 (QTIEVIWTIFPAVILLIIAFPSFILLYLCD). The Mitochondrial intermembrane portion of the chain corresponds to 109-251 (EVISPAMTIK…PKFLEWLNEQ (143 aa)). Positions 186, 221, 223, 225, 229, and 232 each coordinate Cu cation. E223 contacts Mg(2+).

The protein belongs to the cytochrome c oxidase subunit 2 family. In terms of assembly, component of the cytochrome c oxidase (complex IV, CIV), a multisubunit enzyme composed of 12 subunits. The complex is composed of a catalytic core of 3 subunits COX1, COX2 and COX3, encoded in the mitochondrial DNA, and 9 supernumerary subunits COX4, COX5A (or COX5B), COX6, COX7, COX8, COX9, COX12, COX13 and COX26, which are encoded in the nuclear genome. The complex exists as a monomer or a dimer and forms supercomplexes (SCs) in the inner mitochondrial membrane with a dimer of ubiquinol-cytochrome c oxidoreductase (cytochrome b-c1 complex, complex III, CIII), resulting in 2 different assemblies (supercomplexes III(2)IV and III(2)IV(2)). The cofactor is Cu cation. The N-terminal sequence of COX2 is processed by IMP1.

It localises to the mitochondrion inner membrane. The enzyme catalyses 4 Fe(II)-[cytochrome c] + O2 + 8 H(+)(in) = 4 Fe(III)-[cytochrome c] + 2 H2O + 4 H(+)(out). Functionally, component of the cytochrome c oxidase, the last enzyme in the mitochondrial electron transport chain which drives oxidative phosphorylation. The respiratory chain contains 3 multisubunit complexes succinate dehydrogenase (complex II, CII), ubiquinol-cytochrome c oxidoreductase (cytochrome b-c1 complex, complex III, CIII) and cytochrome c oxidase (complex IV, CIV), that cooperate to transfer electrons derived from NADH and succinate to molecular oxygen, creating an electrochemical gradient over the inner membrane that drives transmembrane transport and the ATP synthase. Cytochrome c oxidase is the component of the respiratory chain that catalyzes the reduction of oxygen to water. Electrons originating from reduced cytochrome c in the intermembrane space (IMS) are transferred via the dinuclear copper A center (CU(A)) of COX2 and heme A of COX1 to the active site in COX1, a binuclear center (BNC) formed by heme A3 and copper B (CU(B)). The BNC reduces molecular oxygen to 2 water molecules unsing 4 electrons from cytochrome c in the IMS and 4 protons from the mitochondrial matrix. COX2 is a catalytic core subunit which transfers the electrons from cytochrome c via its dinuclear copper A center (CU(A)) to the BNC of the COX1. This chain is Cytochrome c oxidase subunit 2 (COX2), found in Saccharomyces cerevisiae (strain ATCC 204508 / S288c) (Baker's yeast).